The sequence spans 290 residues: Fructose-1,6-bisphosphatase class 1 (290 aa).

Mg(2+) contacts are provided by Glu-78, Asp-96, Leu-98, and Asp-99. Residues 99-102 (DGSS), Tyr-201, and Lys-226 each bind substrate. Glu-232 contacts Mg(2+).

Belongs to the FBPase class 1 family. As to quaternary structure, homotetramer. Requires Mg(2+) as cofactor.

It is found in the cytoplasm. It catalyses the reaction beta-D-fructose 1,6-bisphosphate + H2O = beta-D-fructose 6-phosphate + phosphate. It participates in carbohydrate biosynthesis; gluconeogenesis. The sequence is that of Fructose-1,6-bisphosphatase class 1 from Helicobacter pylori (strain HPAG1).